The sequence spans 390 residues: METFLFTSESVNEGHPDKLCDQVSDAILDACLEQDPESKVACETCTKTNMVMVFGEITTKAKVDYEKIVRDTCRGIGFTSADVGLDADHCKVLVNIEQQSPDIAQGVHGHLTKKPEEIGAGDQGHMFGYATDETPELMPLTHVLATQLGAKLTEVRKNKTCPWLRPDGKTQVTVEYKNDNGAMVPIRVHTVLISTQHDEGVTNEQIAQDLKEHVIKPVIPAKYLDENTIFHLNPSGRFVIGGPHGDAGLTGRKIIIDTYGGWGAHGEGAFSGKDPTKVDRSGAYIVRQAAKSVVAAGLARRCIVQVSYAIGVAEPLSVFVDTYKTGTIPDKDILALIKENFDFRPGMIAINLDLLRGGNFRYQKTAAYGHFGRDEADFTWETVKALKPKA.

A Mg(2+)-binding site is contributed by Glu9. His15 provides a ligand contact to ATP. Glu43 contacts K(+). The L-methionine site is built by Glu56 and Gln99. Residues Asp167 to Lys169, Ser235 to Phe238, Asp246, Arg252 to Lys253, Ala269, Lys273, and Lys277 each bind ATP. Position 246 (Asp246) interacts with L-methionine. Lys277 serves as a coordination point for L-methionine.

It belongs to the AdoMet synthase family. Homotetramer. Mn(2+) serves as cofactor. Mg(2+) is required as a cofactor. Requires Co(2+) as cofactor. It depends on K(+) as a cofactor.

The protein resides in the cytoplasm. The catalysed reaction is L-methionine + ATP + H2O = S-adenosyl-L-methionine + phosphate + diphosphate. The protein operates within amino-acid biosynthesis; S-adenosyl-L-methionine biosynthesis; S-adenosyl-L-methionine from L-methionine: step 1/1. In terms of biological role, catalyzes the formation of S-adenosylmethionine from methionine and ATP. The reaction comprises two steps that are both catalyzed by the same enzyme: formation of S-adenosylmethionine (AdoMet) and triphosphate, and subsequent hydrolysis of the triphosphate. The chain is S-adenosylmethionine synthase 2 (SAMS2) from Nicotiana tabacum (Common tobacco).